The chain runs to 1063 residues: Structural polyprotein (1063 aa).

Residues 1–131 (MASTTPITME…LGPPTNPFQA (131 aa)) are disordered. Residues 30–69 (GASQSRRPRPPRQRDSSTTGDDSGRDSGGPRRRRGNRGRG) form a human C1QBP/SF2P32-binding region. Serine 46 bears the Phosphoserine; by host mark. Residues 59 to 69 (PRRRRGNRGRG) are compositionally biased toward basic residues. The segment covering 70–87 (QRRDWSRAPPPPEERQET) has biased composition (basic and acidic residues). Positions 93–107 (APKPSRAPPQQPQPP) are enriched in pro residues. An intrachain disulfide couples cysteine 153 to cysteine 197. The functions as E2 signal peptide stretch occupies residues 279-300 (GAPQAFLAGLLLAAVAVGTARA). The Extracellular portion of the chain corresponds to 301-534 (GLQPRADMAA…LWLATANALS (234 aa)). N-linked (GlcNAc...) asparagine; by host glycans are attached at residues asparagine 353, asparagine 371, asparagine 410, and asparagine 429. Residues 535–555 (LDHALAAFVLLVPWVLIFMVC) form a helical membrane-spanning segment. Topologically, residues 556-582 (RRTCRRRGAAAALTAVVLQGYNPPAYG) are cytoplasmic. The segment at 563-582 (GAAAALTAVVLQGYNPPAYG) is functions as E1 signal peptide. Residues 583 to 1028 (EEAFTYLCTA…QTWAEWAAAH (446 aa)) lie on the Extracellular side of the membrane. 8 disulfides stabilise this stretch: cysteine 590–cysteine 595, cysteine 619–cysteine 824, cysteine 641–cysteine 653, cysteine 699–cysteine 712, cysteine 758–cysteine 767, cysteine 807–cysteine 817, cysteine 931–cysteine 934, and cysteine 950–cysteine 983. Asparagine 658 carries an N-linked (GlcNAc...) asparagine; by host glycan. Ca(2+) is bound by residues asparagine 670 and alanine 671. Positions 718 and 719 each coordinate Ca(2+). Asparagine 759 and asparagine 791 each carry an N-linked (GlcNAc...) asparagine; by host glycan. O-linked (GalNAc...) threonine; by host glycans are attached at residues threonine 1011 and threonine 1012. The chain crosses the membrane as a helical span at residues 1029 to 1049 (WWQLTLGAICALLLAGLLACC). Over 1050–1063 (AKCLYYLRGAIAPR) the chain is Extracellular.

As to quaternary structure, homodimer; further assembles into homooligomer. Interacts with human C1QBP. Interacts (via N-terminus) with protease/methyltransferase p150. Heterodimer with spike glycoprotein E2. In terms of assembly, heterodimer with spike glycoprotein E1. In terms of processing, structural polyprotein: Specific enzymatic cleavages in vivo yield mature proteins. Two signal peptidase-mediated cleavages within the polyprotein produce the structural proteins capsid, E2, and E1. The E2 signal peptide remains attached to the C-terminus of the capsid protein after cleavage by the signal peptidase. Another signal peptide at E2 C-terminus directs E1 to the ER, with a similar mechanism. Contains three N-linked oligosaccharides. Post-translationally, capsid is phosphorylated on Ser-46 by host. This phosphorylation negatively regulates capsid protein RNA-binding activity. Dephosphorylated by human PP1A.

The protein localises to the virion. Its subcellular location is the host cytoplasm. It localises to the host mitochondrion. The protein resides in the virion membrane. It is found in the host Golgi apparatus membrane. Its function is as follows. Capsid protein interacts with genomic RNA and assembles into icosahedric core particles 65-70 nm in diameter. The resulting nucleocapsid eventually associates with the cytoplasmic domain of E2 at the cell membrane, leading to budding and formation of mature virions from host Golgi membranes. Phosphorylation negatively regulates RNA-binding activity, possibly delaying virion assembly during the viral replication phase. Capsid protein dimerizes and becomes disulfide-linked in the virion. Modulates genomic RNA replication. Modulates subgenomic RNA synthesis by interacting with human C1QBP/SF2P32. Induces both perinuclear clustering of mitochondria and the formation of electron-dense intermitochondrial plaques, both hallmarks of rubella virus infected cells. Induces apoptosis when expressed in transfected cells. Responsible for viral attachment to target host cell, by binding to the cell receptor. Its transport to the plasma membrane depends on interaction with E1 protein. The surface glycoproteins display an irregular helical organization and a pseudo-tetrameric inner nucleocapsid arrangement. Functionally, class II viral fusion protein. Fusion activity is inactive as long as E1 is bound to E2 in mature virion. After virus attachment to target cell and clathrin-mediated endocytosis, acidification of the endosome would induce dissociation of E1/E2 heterodimer and concomitant trimerization of the E1 subunits. This E1 homotrimer is fusion active, and promotes release of viral nucleocapsid in cytoplasm after endosome and viral membrane fusion. The cytoplasmic tail of spike glycoprotein E1 modulates virus release. The surface glycoproteins display an irregular helical organization and a pseudo-tetrameric inner nucleocapsid arrangement. The chain is Structural polyprotein from Homo sapiens (Human).